Consider the following 102-residue polypeptide: ATP-dependent Clp protease adapter protein ClpS (102 aa).

Belongs to the ClpS family. Binds to the N-terminal domain of the chaperone ClpA.

Its function is as follows. Involved in the modulation of the specificity of the ClpAP-mediated ATP-dependent protein degradation. This Shewanella sp. (strain ANA-3) protein is ATP-dependent Clp protease adapter protein ClpS.